A 125-amino-acid polypeptide reads, in one-letter code: MAAKKSSSPNRGFKVADQIQRDLTELIRDLKDPRIGMVTLQGVEVTPDYAHAKVFFSVLIGDGEASEEALNQAAGFLRNGLFKRLHIHTVPTLHFVYDRTTEKAADMNALIARAVASRSKDDDAA.

Belongs to the RbfA family. Monomer. Binds 30S ribosomal subunits, but not 50S ribosomal subunits or 70S ribosomes.

The protein resides in the cytoplasm. In terms of biological role, one of several proteins that assist in the late maturation steps of the functional core of the 30S ribosomal subunit. Associates with free 30S ribosomal subunits (but not with 30S subunits that are part of 70S ribosomes or polysomes). Required for efficient processing of 16S rRNA. May interact with the 5'-terminal helix region of 16S rRNA. This is Ribosome-binding factor A from Acidovorax sp. (strain JS42).